We begin with the raw amino-acid sequence, 263 residues long: HTH-type transcriptional repressor NanR (263 aa).

The interval Met1–Leu22 is disordered. In terms of domain architecture, HTH gntR-type spans Lys30–Pro98. Positions Glu58 to Ala77 form a DNA-binding region, H-T-H motif.

Belongs to the NanR family.

In terms of biological role, transcriptional repressor that controls expression of the genes required for the catabolism of sialic acids. The chain is HTH-type transcriptional repressor NanR from Shigella boydii serotype 4 (strain Sb227).